The sequence spans 144 residues: Large ribosomal subunit protein uL15 (144 aa).

A disordered region spans residues 1–57 (MELNNLKPAEGSKHAKRRVGRGIGSGLGKTAGRGHKGQKSRSGGFHKVGFEGGQMPL). The segment covering 21–31 (RGIGSGLGKTA) has biased composition (gly residues).

Belongs to the universal ribosomal protein uL15 family. Part of the 50S ribosomal subunit.

Its function is as follows. Binds to the 23S rRNA. This chain is Large ribosomal subunit protein uL15, found in Paraburkholderia phytofirmans (strain DSM 17436 / LMG 22146 / PsJN) (Burkholderia phytofirmans).